The primary structure comprises 242 residues: Probable transcriptional regulatory protein NGO_1291 (242 aa).

The protein belongs to the TACO1 family.

The protein resides in the cytoplasm. The polypeptide is Probable transcriptional regulatory protein NGO_1291 (Neisseria gonorrhoeae (strain ATCC 700825 / FA 1090)).